A 229-amino-acid polypeptide reads, in one-letter code: Heptaprenylglyceryl phosphate synthase (229 aa).

A sn-glycerol 1-phosphate-binding site is contributed by Lys12. Mg(2+) is bound by residues Asp14 and Ser40. Sn-glycerol 1-phosphate is bound by residues 159–164 (YLEYSG), Gly189, and 209–210 (GN).

This sequence belongs to the GGGP/HepGP synthase family. Group I subfamily. Homodimer. Requires Mg(2+) as cofactor.

It catalyses the reaction sn-glycerol 1-phosphate + all-trans-heptaprenyl diphosphate = 3-heptaprenyl-sn-glycero-1-phosphate + diphosphate. It functions in the pathway membrane lipid metabolism; glycerophospholipid metabolism. Its function is as follows. Prenyltransferase that catalyzes in vivo the transfer of the heptaprenyl moiety of heptaprenyl pyrophosphate (HepPP; 35 carbon atoms) to the C3 hydroxyl of sn-glycerol-1-phosphate (G1P), producing heptaprenylglyceryl phosphate (HepGP). This reaction is an ether-bond-formation step in the biosynthesis of archaea-type G1P-based membrane lipids found in Bacillales. The chain is Heptaprenylglyceryl phosphate synthase from Bacillus velezensis (strain DSM 23117 / BGSC 10A6 / LMG 26770 / FZB42) (Bacillus amyloliquefaciens subsp. plantarum).